We begin with the raw amino-acid sequence, 289 residues long: Serine/threonine-protein phosphatase Pgam5, mitochondrial (289 aa).

The helical transmembrane segment at 7–23 (FACGTGAGLAAYYLQKL) threads the bilayer.

Belongs to the phosphoglycerate mutase family. BPG-dependent PGAM subfamily. In terms of assembly, interacts with Pk92B/ASK1.

It localises to the mitochondrion outer membrane. The enzyme catalyses O-phospho-L-seryl-[protein] + H2O = L-seryl-[protein] + phosphate. It catalyses the reaction O-phospho-L-threonyl-[protein] + H2O = L-threonyl-[protein] + phosphate. Displays phosphatase activity for serine/threonine residues, and dephosphorylates and activates Pk92B kinase. Has apparently no phosphoglycerate mutase activity. In Drosophila virilis (Fruit fly), this protein is Serine/threonine-protein phosphatase Pgam5, mitochondrial.